Reading from the N-terminus, the 241-residue chain is Small ribosomal subunit protein eS4 (241 aa).

One can recognise an S4 RNA-binding domain in the interval 37-99 (IPLGLLLRDY…ADLYLRIVPD (63 aa)).

Belongs to the eukaryotic ribosomal protein eS4 family.

This chain is Small ribosomal subunit protein eS4, found in Metallosphaera sedula (strain ATCC 51363 / DSM 5348 / JCM 9185 / NBRC 15509 / TH2).